Consider the following 165-residue polypeptide: Histone H1-like protein HC2 (165 aa).

2 stretches are compositionally biased toward basic residues: residues 1–50 (MLGV…KTVA) and 59–80 (PVAK…KKTV). Residues 1 to 80 (MLGVQKKRST…VRKVAAKKTV (80 aa)) are disordered.

The protein belongs to the histone H1/H5 family. HCT subfamily.

Functionally, might have a role in establishing the nucleoid structure of elementary bodies. In Chlamydia trachomatis, this protein is Histone H1-like protein HC2 (hctB).